Consider the following 92-residue polypeptide: Small ribosomal subunit protein uS19c (92 aa).

This sequence belongs to the universal ribosomal protein uS19 family.

The protein localises to the plastid. Functionally, protein S19 forms a complex with S13 that binds strongly to the 16S ribosomal RNA. The sequence is that of Small ribosomal subunit protein uS19c from Cuscuta reflexa (Southern Asian dodder).